Here is a 134-residue protein sequence, read N- to C-terminus: Small ribosomal subunit protein uS9 (134 aa).

A disordered region spans residues 114-134 (EVERKKYGLKKARRAPQFSKR). Over residues 120-134 (YGLKKARRAPQFSKR) the composition is skewed to basic residues.

Belongs to the universal ribosomal protein uS9 family.

This Thermotoga neapolitana (strain ATCC 49049 / DSM 4359 / NBRC 107923 / NS-E) protein is Small ribosomal subunit protein uS9.